We begin with the raw amino-acid sequence, 121 residues long: Large ribosomal subunit protein bL20 (121 aa).

The protein belongs to the bacterial ribosomal protein bL20 family.

Its function is as follows. Binds directly to 23S ribosomal RNA and is necessary for the in vitro assembly process of the 50S ribosomal subunit. It is not involved in the protein synthesizing functions of that subunit. In Chlamydia felis (strain Fe/C-56) (Chlamydophila felis), this protein is Large ribosomal subunit protein bL20.